The sequence spans 368 residues: MVISPHSSVSPVASPSRPRIVAALSGGVDSSTVAALLQEQGYAVEGVTLWLMRGKGQCCTEGLVDAAAVCEQLGIPHHVVDSRELFQANIVDYLVAGYAEGITPLPCSQCNKLVKFGPLLAYAREKLGISQMATGHYARVRFNAELGRYQLLRAVDRQKDQSYFLYDLSQEHLAHSLFPLGEYTKAQTRQLAARYGLVTADKPESQDLCLIETYGSMRSFLDQYLGQRPGEIVDTQGRVLGSHEGIHHYTVGQRKGLGIASSRPLYVVRIDAAMNRVVVGEREEATQAEAWVSQVNWVSIPAPTGSLAVEVQVRYRTPPVPAMVIPESPERVKLQFAEPQFGVTPGQAAVWYHGDLLLGGGILERPSP.

Residues 23-30 (ALSGGVDS) and leucine 49 each bind ATP. The active-site Nucleophile is the cysteine 110. Cysteine 110 and cysteine 209 are oxidised to a cystine. An ATP-binding site is contributed by glycine 135. Positions 159 to 161 (KDQ) are interaction with tRNA. Catalysis depends on cysteine 209, which acts as the Cysteine persulfide intermediate. The segment at 314–315 (RY) is interaction with tRNA.

It belongs to the MnmA/TRMU family.

The protein localises to the cytoplasm. It catalyses the reaction S-sulfanyl-L-cysteinyl-[protein] + uridine(34) in tRNA + AH2 + ATP = 2-thiouridine(34) in tRNA + L-cysteinyl-[protein] + A + AMP + diphosphate + H(+). Functionally, catalyzes the 2-thiolation of uridine at the wobble position (U34) of tRNA, leading to the formation of s(2)U34. The sequence is that of tRNA-specific 2-thiouridylase MnmA from Synechococcus sp. (strain JA-2-3B'a(2-13)) (Cyanobacteria bacterium Yellowstone B-Prime).